Reading from the N-terminus, the 227-residue chain is Orotate phosphoribosyltransferase (227 aa).

K26 serves as a coordination point for 5-phospho-alpha-D-ribose 1-diphosphate. Position 34–35 (34–35 (FF)) interacts with orotate. Residues 72–73 (YK), R98, K99, K102, H104, and 123–131 (DDVVSAGLS) contribute to the 5-phospho-alpha-D-ribose 1-diphosphate site. The orotate site is built by S127 and R155.

It belongs to the purine/pyrimidine phosphoribosyltransferase family. PyrE subfamily. As to quaternary structure, homodimer. Requires Mg(2+) as cofactor.

It catalyses the reaction orotidine 5'-phosphate + diphosphate = orotate + 5-phospho-alpha-D-ribose 1-diphosphate. It functions in the pathway pyrimidine metabolism; UMP biosynthesis via de novo pathway; UMP from orotate: step 1/2. In terms of biological role, catalyzes the transfer of a ribosyl phosphate group from 5-phosphoribose 1-diphosphate to orotate, leading to the formation of orotidine monophosphate (OMP). This chain is Orotate phosphoribosyltransferase, found in Nitrosomonas europaea (strain ATCC 19718 / CIP 103999 / KCTC 2705 / NBRC 14298).